The chain runs to 513 residues: Ribonuclease Y (513 aa).

A helical transmembrane segment spans residues N4–L24. One can recognise a KH domain in the interval T203–L266. The 94-residue stretch at V329–A422 folds into the HD domain.

Belongs to the RNase Y family.

The protein resides in the cell membrane. Functionally, endoribonuclease that initiates mRNA decay. This Desulforudis audaxviator (strain MP104C) protein is Ribonuclease Y.